The sequence spans 135 residues: NAD(P)H-quinone oxidoreductase subunit 3 (135 aa).

A run of 3 helical transmembrane segments spans residues 15–35, 79–99, and 104–124; these read IVFFLSGYEYFLGFLMISSLV, MFALVFVIFDVETVFLYPWAV, and LGLLAFIEALIFIAILVVALV.

The protein belongs to the complex I subunit 3 family. In terms of assembly, NDH-1 can be composed of about 15 different subunits; different subcomplexes with different compositions have been identified which probably have different functions.

It is found in the cellular thylakoid membrane. It catalyses the reaction a plastoquinone + NADH + (n+1) H(+)(in) = a plastoquinol + NAD(+) + n H(+)(out). It carries out the reaction a plastoquinone + NADPH + (n+1) H(+)(in) = a plastoquinol + NADP(+) + n H(+)(out). NDH-1 shuttles electrons from an unknown electron donor, via FMN and iron-sulfur (Fe-S) centers, to quinones in the respiratory and/or the photosynthetic chain. The immediate electron acceptor for the enzyme in this species is believed to be plastoquinone. Couples the redox reaction to proton translocation, and thus conserves the redox energy in a proton gradient. Cyanobacterial NDH-1 also plays a role in inorganic carbon-concentration. The polypeptide is NAD(P)H-quinone oxidoreductase subunit 3 (Trichodesmium erythraeum (strain IMS101)).